Reading from the N-terminus, the 426-residue chain is Citrate synthase (426 aa).

Catalysis depends on residues H314 and D372.

This sequence belongs to the citrate synthase family.

It carries out the reaction oxaloacetate + acetyl-CoA + H2O = citrate + CoA + H(+). It participates in carbohydrate metabolism; tricarboxylic acid cycle; isocitrate from oxaloacetate: step 1/2. This chain is Citrate synthase (gltA), found in Helicobacter pylori (strain J99 / ATCC 700824) (Campylobacter pylori J99).